Reading from the N-terminus, the 251-residue chain is Type III pantothenate kinase (251 aa).

6–13 (DCGNSFIK) lines the ATP pocket. Substrate is bound by residues Tyr-93 and 100-103 (GLDR). Asp-102 serves as the catalytic Proton acceptor. Asp-122 lines the K(+) pocket. Thr-125 provides a ligand contact to ATP. Substrate is bound at residue Thr-182.

It belongs to the type III pantothenate kinase family. As to quaternary structure, homodimer. The cofactor is NH4(+). K(+) is required as a cofactor.

The protein resides in the cytoplasm. The catalysed reaction is (R)-pantothenate + ATP = (R)-4'-phosphopantothenate + ADP + H(+). It functions in the pathway cofactor biosynthesis; coenzyme A biosynthesis; CoA from (R)-pantothenate: step 1/5. Functionally, catalyzes the phosphorylation of pantothenate (Pan), the first step in CoA biosynthesis. The sequence is that of Type III pantothenate kinase from Azotobacter vinelandii (strain DJ / ATCC BAA-1303).